The primary structure comprises 190 residues: MGLKSDKWIREQSIKNGMITPFCEENMGVGVVSYGLSSYGYDIRVADEFKIFTNVGGTVVDPKNFDEKNIVDFKGDVCIVPPNSFALARTIEYFKMPRDVLAICLGKSTYARCGIIVNVTPFEPGFEGHITIEISNTTPLPAKIYANEGIAQVLFLQGDEICEVSYADKKGKYQRQKGITLPRILEGDKK.

DCTP is bound at residue K107–R112. E133 (proton donor/acceptor) is an active-site residue. Q152, Y166, and Q176 together coordinate dCTP.

This sequence belongs to the dCTP deaminase family. In terms of assembly, homotrimer.

The enzyme catalyses dCTP + H2O + H(+) = dUTP + NH4(+). It functions in the pathway pyrimidine metabolism; dUMP biosynthesis; dUMP from dCTP (dUTP route): step 1/2. Functionally, catalyzes the deamination of dCTP to dUTP. This is dCTP deaminase from Campylobacter hominis (strain ATCC BAA-381 / DSM 21671 / CCUG 45161 / LMG 19568 / NCTC 13146 / CH001A).